The primary structure comprises 548 residues: (S)-beta-macrocarpene synthase (548 aa).

Residues Asp302 and Asp306 each coordinate Mg(2+). Positions 302, 306, 443, and 446 each coordinate substrate. The DDXXD motif signature appears at 302-306 (DDTLD). Residues Asn446, Ser450, and Glu454 each contribute to the Mg(2+) site.

The protein belongs to the terpene synthase family. Monomer. Mg(2+) is required as a cofactor. Mn(2+) serves as cofactor. As to expression, expressed in roots. Not detected in leaves, unless damaged by herbivory or infected by fungi.

It localises to the cytoplasm. The enzyme catalyses (S)-beta-bisabolene = (S)-beta-macrocarpene. It catalyses the reaction (2E,6E)-farnesyl diphosphate = (S)-beta-bisabolene + diphosphate. The catalysed reaction is (2E)-geranyl diphosphate = (4S)-limonene + diphosphate. It carries out the reaction (2E)-geranyl diphosphate = beta-myrcene + diphosphate. The enzyme catalyses (2E)-geranyl diphosphate = terpinolene + diphosphate. It catalyses the reaction (2E)-geranyl diphosphate + H2O = (S)-linalool + diphosphate. It functions in the pathway secondary metabolite biosynthesis; terpenoid biosynthesis. In terms of biological role, involved in the biosynthesis of the bicyclic sesquiterpene (S)-beta-macrocarpene. Can use both geranyl diphosphate and farnesyl diphosphate as substrate, but not geranylgeranyl diphosphate. Produces mainly (S)-beta-macrocarpene, but also smaller amounts of beta-bisabolene and (E)-beta-farnesene when used with farnesyl diphosphate as substrate. In the presence of geranyl diphosphate, produces the acyclic monoterpenes beta-myrcene and linalool along with minor amounts of the cyclic compounds limonene, alpha-thujene, sabinene and alpha-terpinolene. May be involved in plant defense. This is (S)-beta-macrocarpene synthase from Zea mays (Maize).